Here is a 660-residue protein sequence, read N- to C-terminus: Arginine--tRNA ligase, cytoplasmic (660 aa).

The residue at position 1 (M1) is an N-acetylmethionine. The segment at 1–72 (MDVLVSECSA…QAERNKPTKN (72 aa)) is could be involved in the assembly of the multisynthetase complex. L-arginine contacts are provided by residues 200–202 (SPN), H211, Y384, D388, and Q412. Residues 201–212 (PNIAKEMHVGHL) carry the 'HIGH' region motif. The interval 529–543 (NTAAYLLYAFTRIRS) is interaction with tRNA.

It belongs to the class-I aminoacyl-tRNA synthetase family. Interacts (via N-terminus) with AIMP1 (via N-terminus); this stimulates its catalytic activity. Interacts (via N-terminus) with LARS2 (via C-terminus). Monomer. Part of a multisubunit complex that groups tRNA ligases for Arg (RARS1), Asp (DARS1), Gln (QARS1), Ile (IARS1), Leu (LARS1), Lys (KARS1), Met (MARS1) the bifunctional ligase for Glu and Pro (EPRS1) and the auxiliary subunits AIMP1/p43, AIMP2/p38 and EEF1E1/p18. Interacts with QARS1. Part of a complex composed of RARS1, QARS1 and AIMP1.

Its subcellular location is the cytoplasm. The protein localises to the cytosol. It catalyses the reaction tRNA(Arg) + L-arginine + ATP = L-arginyl-tRNA(Arg) + AMP + diphosphate. Forms part of a macromolecular complex that catalyzes the attachment of specific amino acids to cognate tRNAs during protein synthesis. Modulates the secretion of AIMP1 and may be involved in generation of the inflammatory cytokine EMAP2 from AIMP1. The protein is Arginine--tRNA ligase, cytoplasmic of Homo sapiens (Human).